Here is a 188-residue protein sequence, read N- to C-terminus: HGPRTase-like protein 1 (188 aa).

Belongs to the purine/pyrimidine phosphoribosyltransferase family. Archaeal HPRT subfamily.

May catalyze a purine salvage reaction, the substrate is unknown. This chain is HGPRTase-like protein 1, found in Haloquadratum walsbyi (strain DSM 16854 / JCM 12705 / C23).